A 176-amino-acid chain; its full sequence is Putative L,D-transpeptidase YqjB (176 aa).

Positions 1–25 (MRFFLCSIFMMISPIWPLGENPLPG) are cleaved as a signal peptide. The L,D-TPase catalytic domain maps to 27-151 (PYVIVNKRTN…IPVGTRVLIT (125 aa)). The active-site Proton donor/acceptor is His111. Cys127 (nucleophile) is an active-site residue.

This sequence belongs to the YkuD family.

It participates in cell wall biogenesis; peptidoglycan biosynthesis. The polypeptide is Putative L,D-transpeptidase YqjB (yqjB) (Bacillus subtilis (strain 168)).